We begin with the raw amino-acid sequence, 159 residues long: Ribosomal RNA large subunit methyltransferase H (159 aa).

Residues Ile-75, Gly-108, and 127–132 each bind S-adenosyl-L-methionine; that span reads FGRMTL.

It belongs to the RNA methyltransferase RlmH family. In terms of assembly, homodimer.

It is found in the cytoplasm. It catalyses the reaction pseudouridine(1915) in 23S rRNA + S-adenosyl-L-methionine = N(3)-methylpseudouridine(1915) in 23S rRNA + S-adenosyl-L-homocysteine + H(+). In terms of biological role, specifically methylates the pseudouridine at position 1915 (m3Psi1915) in 23S rRNA. The protein is Ribosomal RNA large subunit methyltransferase H of Lactococcus lactis subsp. lactis (strain IL1403) (Streptococcus lactis).